A 408-amino-acid chain; its full sequence is LL-diaminopimelate aminotransferase (408 aa).

2 residues coordinate substrate: Tyr-15 and Gly-42. Residues Tyr-72, 108-109, Tyr-132, Asn-186, Tyr-217, and 245-247 each bind pyridoxal 5'-phosphate; these read AK and SFS. Substrate is bound by residues Lys-109, Tyr-132, and Asn-186. The residue at position 248 (Lys-248) is an N6-(pyridoxal phosphate)lysine. Residues Arg-256 and Asn-291 each coordinate pyridoxal 5'-phosphate. Positions 291 and 386 each coordinate substrate.

This sequence belongs to the class-I pyridoxal-phosphate-dependent aminotransferase family. LL-diaminopimelate aminotransferase subfamily. In terms of assembly, homodimer. Requires pyridoxal 5'-phosphate as cofactor.

The catalysed reaction is (2S,6S)-2,6-diaminopimelate + 2-oxoglutarate = (S)-2,3,4,5-tetrahydrodipicolinate + L-glutamate + H2O + H(+). It functions in the pathway amino-acid biosynthesis; L-lysine biosynthesis via DAP pathway; LL-2,6-diaminopimelate from (S)-tetrahydrodipicolinate (aminotransferase route): step 1/1. Its function is as follows. Involved in the synthesis of meso-diaminopimelate (m-DAP or DL-DAP), required for both lysine and peptidoglycan biosynthesis. Catalyzes the direct conversion of tetrahydrodipicolinate to LL-diaminopimelate. In Desulfotalea psychrophila (strain LSv54 / DSM 12343), this protein is LL-diaminopimelate aminotransferase.